The sequence spans 234 residues: LexA repressor (234 aa).

Residues 26–46 (FDEMKEALDLASKSGIHRLIT) constitute a DNA-binding region (H-T-H motif). The disordered stretch occupies residues 73–107 (ATAAAPPKGRGAFRPQVFEGGGAPPPAASPAAAAN). Catalysis depends on for autocatalytic cleavage activity residues S155 and K192.

Belongs to the peptidase S24 family. Homodimer.

It carries out the reaction Hydrolysis of Ala-|-Gly bond in repressor LexA.. Represses a number of genes involved in the response to DNA damage (SOS response), including recA and lexA. In the presence of single-stranded DNA, RecA interacts with LexA causing an autocatalytic cleavage which disrupts the DNA-binding part of LexA, leading to derepression of the SOS regulon and eventually DNA repair. This chain is LexA repressor, found in Caulobacter vibrioides (strain ATCC 19089 / CIP 103742 / CB 15) (Caulobacter crescentus).